Consider the following 332-residue polypeptide: Glycerol-3-phosphate dehydrogenase [NAD(P)+] (332 aa).

Serine 15, tryptophan 16, and lysine 110 together coordinate NADPH. 3 residues coordinate sn-glycerol 3-phosphate: lysine 110, glycine 137, and serine 139. Position 141 (alanine 141) interacts with NADPH. Residues lysine 192, aspartate 245, serine 255, arginine 256, and asparagine 257 each coordinate sn-glycerol 3-phosphate. Lysine 192 acts as the Proton acceptor in catalysis. Position 256 (arginine 256) interacts with NADPH. NADPH is bound at residue glutamate 282.

The protein belongs to the NAD-dependent glycerol-3-phosphate dehydrogenase family.

The protein resides in the cytoplasm. The catalysed reaction is sn-glycerol 3-phosphate + NAD(+) = dihydroxyacetone phosphate + NADH + H(+). It carries out the reaction sn-glycerol 3-phosphate + NADP(+) = dihydroxyacetone phosphate + NADPH + H(+). The protein operates within membrane lipid metabolism; glycerophospholipid metabolism. Catalyzes the reduction of the glycolytic intermediate dihydroxyacetone phosphate (DHAP) to sn-glycerol 3-phosphate (G3P), the key precursor for phospholipid synthesis. This chain is Glycerol-3-phosphate dehydrogenase [NAD(P)+], found in Coxiella burnetii (strain RSA 331 / Henzerling II).